Here is a 312-residue protein sequence, read N- to C-terminus: Probable rRNA-processing protein EBP2 (312 aa).

The disordered stretch occupies residues 1 to 32 (MLHHEDESSPESDSDFDASELTDKELQEAFSQ). Acidic residues predominate over residues 8 to 20 (SSPESDSDFDASE). Positions 140–176 (EMAKTDQHMQKIRHKLQLKQASMEKSEKAKQLRALRK) form a coiled coil. The disordered stretch occupies residues 211–312 (LDFLEGDQTP…VRQKMKSKRR (102 aa)). Residues 282–312 (KGPHRPGKKGGKNANKRPGKNVRQKMKSKRR) are compositionally biased toward basic residues.

This sequence belongs to the EBP2 family.

Its subcellular location is the nucleus. It localises to the nucleolus. Required for the processing of the 27S pre-rRNA. The chain is Probable rRNA-processing protein EBP2 (ebna1bp2) from Xenopus laevis (African clawed frog).